The following is a 173-amino-acid chain: Myosin light chain 5 (173 aa).

The tract at residues 1–22 (MASRKTKKKEGGGLRAQRASSN) is disordered. EF-hand domains are found at residues 30 to 65 (TQIQ…LGKT), 100 to 135 (DAEE…QADK), and 136 to 171 (MTAE…GEEK). 4 residues coordinate Ca(2+): Asp43, Asn45, Asp47, and Asp54.

As to quaternary structure, myosin is a hexamer of 2 heavy chains and 4 light chains. Jaw-closing muscles.

The polypeptide is Myosin light chain 5 (MYL5) (Felis catus (Cat)).